The sequence spans 595 residues: Elongation factor 4 (595 aa).

Residues lysine 2–lysine 184 enclose the tr-type G domain. GTP contacts are provided by residues aspartate 14–threonine 19 and asparagine 131–aspartate 134.

Belongs to the TRAFAC class translation factor GTPase superfamily. Classic translation factor GTPase family. LepA subfamily.

The protein localises to the cell inner membrane. The enzyme catalyses GTP + H2O = GDP + phosphate + H(+). Required for accurate and efficient protein synthesis under certain stress conditions. May act as a fidelity factor of the translation reaction, by catalyzing a one-codon backward translocation of tRNAs on improperly translocated ribosomes. Back-translocation proceeds from a post-translocation (POST) complex to a pre-translocation (PRE) complex, thus giving elongation factor G a second chance to translocate the tRNAs correctly. Binds to ribosomes in a GTP-dependent manner. This Ruthia magnifica subsp. Calyptogena magnifica protein is Elongation factor 4.